Reading from the N-terminus, the 686-residue chain is DNA ligase (686 aa).

Residues aspartate 33–aspartate 37, serine 82–leucine 83, and glutamate 122 each bind NAD(+). Lysine 124 functions as the N6-AMP-lysine intermediate in the catalytic mechanism. Positions 145, 182, 300, and 324 each coordinate NAD(+). The Zn(2+) site is built by cysteine 418, cysteine 421, cysteine 436, and cysteine 441. The 87-residue stretch at alanine 600–proline 686 folds into the BRCT domain.

The protein belongs to the NAD-dependent DNA ligase family. LigA subfamily. It depends on Mg(2+) as a cofactor. Mn(2+) is required as a cofactor.

It carries out the reaction NAD(+) + (deoxyribonucleotide)n-3'-hydroxyl + 5'-phospho-(deoxyribonucleotide)m = (deoxyribonucleotide)n+m + AMP + beta-nicotinamide D-nucleotide.. In terms of biological role, DNA ligase that catalyzes the formation of phosphodiester linkages between 5'-phosphoryl and 3'-hydroxyl groups in double-stranded DNA using NAD as a coenzyme and as the energy source for the reaction. It is essential for DNA replication and repair of damaged DNA. The sequence is that of DNA ligase from Synechococcus sp. (strain JA-2-3B'a(2-13)) (Cyanobacteria bacterium Yellowstone B-Prime).